The following is a 227-amino-acid chain: Probable septum site-determining protein MinC (227 aa).

This sequence belongs to the MinC family. As to quaternary structure, interacts with MinD and FtsZ.

Functionally, cell division inhibitor that blocks the formation of polar Z ring septums. Rapidly oscillates between the poles of the cell to destabilize FtsZ filaments that have formed before they mature into polar Z rings. Prevents FtsZ polymerization. The sequence is that of Probable septum site-determining protein MinC from Shouchella clausii (strain KSM-K16) (Alkalihalobacillus clausii).